Consider the following 218-residue polypeptide: Cytochrome c biogenesis ATP-binding export protein CcmA (218 aa).

The region spanning 2-217 (LEAKNLTCIR…KSCLSACCAV (216 aa)) is the ABC transporter domain. 34-41 (GPNGAGKT) lines the ATP pocket.

It belongs to the ABC transporter superfamily. CcmA exporter (TC 3.A.1.107) family. The complex is composed of two ATP-binding proteins (CcmA) and two transmembrane proteins (CcmB).

Its subcellular location is the cell inner membrane. It catalyses the reaction heme b(in) + ATP + H2O = heme b(out) + ADP + phosphate + H(+). In terms of biological role, part of the ABC transporter complex CcmAB involved in the biogenesis of c-type cytochromes; once thought to export heme, this seems not to be the case, but its exact role is uncertain. Responsible for energy coupling to the transport system. In Yersinia pseudotuberculosis serotype I (strain IP32953), this protein is Cytochrome c biogenesis ATP-binding export protein CcmA.